The primary structure comprises 278 residues: MADS-box transcription factor PHERES 2 (278 aa).

In terms of domain architecture, MADS-box spans 1-60 (MKRKMKLSLIENSVSRKTTFTKRKKGMTKKLTELVTLCGVEACAVVYSPFNSIPEAWPSR).

In terms of assembly, interacts with AGL61/DIANA and AGL62. As to expression, male gametophyte, embryo and endosperm.

It is found in the nucleus. Probable transcription factor involved in the development of gametophytes and seeds. This Arabidopsis thaliana (Mouse-ear cress) protein is MADS-box transcription factor PHERES 2 (PHE2).